An 84-amino-acid chain; its full sequence is uncharacterized protein (84 aa).

It belongs to the chlamydial CPn_0710/CT_666/TC_0037 family.

This is an uncharacterized protein from Chlamydia pneumoniae (Chlamydophila pneumoniae).